The sequence spans 305 residues: Alpha-N-acetylgalactosaminide alpha-2,6-sialyltransferase 3 (305 aa).

Topologically, residues 1 to 8 (MACILKRK) are cytoplasmic. The helical; Signal-anchor for type II membrane protein transmembrane segment at 9–28 (PVLVVSFIALCILLLAMRLV) threads the bilayer. Residues 29-305 (NDATFPLLLN…VFTHPNWTLS (277 aa)) are Lumenal-facing. An intrachain disulfide couples Cys80 to Cys229. Residues Asn239 and Asn301 are each glycosylated (N-linked (GlcNAc...) asparagine).

It belongs to the glycosyltransferase 29 family. As to expression, in adult tissues, high expression in brain, lung and heart and to a lesser extent in kidney, mammary gland, spleen, testis and thymus.

Its subcellular location is the golgi apparatus membrane. It catalyses the reaction an alpha-Neu5Ac-(2-&gt;3)-beta-D-Gal-(1-&gt;3)-D-GlcNAc derivative + CMP-N-acetyl-beta-neuraminate = an alpha-Neu5Ac-(2-&gt;3)-beta-D-Gal-(1-&gt;3)-[alpha-Neu5Ac-(2-&gt;6)]-D-GlcNAc derivative + CMP + H(+). The enzyme catalyses a ganglioside GM1b (d18:1(4E)) + CMP-N-acetyl-beta-neuraminate = a ganglioside GD1alpha (d18:1(4E)) + CMP + H(+). It carries out the reaction a globoside MSGG + CMP-N-acetyl-beta-neuraminate = a globoside DSGG + CMP + H(+). The catalysed reaction is 3-O-[alpha-Neu5Ac-(2-&gt;3)-beta-D-Gal-(1-&gt;3)-alpha-D-GalNAc]-L-Ser-[protein] + CMP-N-acetyl-beta-neuraminate = a 3-O-{alpha-Neu5Ac-(2-&gt;3)-beta-D-Gal-(1-&gt;3)-[alpha-Neu5Ac-(2-&gt;6)]-alpha-D-GalNAc}-L-seryl-[protein] + CMP + H(+). It catalyses the reaction 3-O-[alpha-Neu5Ac-(2-&gt;3)-beta-D-Gal-(1-&gt;3)-alpha-D-GalNAc]-L-Thr-[protein] + CMP-N-acetyl-beta-neuraminate = a 3-O-{alpha-Neu5Ac-(2-&gt;3)-beta-D-Gal-(1-&gt;3)-[alpha-Neu5Ac-(2-&gt;6)]-alpha-D-GalNAc}-L-threonyl-[protein] + CMP + H(+). It participates in protein modification; protein glycosylation. Its pathway is glycolipid biosynthesis. Its function is as follows. Transfers the sialyl group (N-acetyl-alpha-neuraminyl or NeuAc) from CMP-NeuAc to the GalNAc residue on the NeuAc-alpha-2,3-Gal-beta-1,3-GalNAc sequence of glycoproteins and glycolipids forming an alpha-2,6-linkage. Produces branched type disialyl structures by transfer of a sialyl group onto a GalNAc residue inside the backbone core chains. ST6GalNAcIII prefers glycolipids to glycoproteins, predominantly catalyzing the biosynthesis of ganglioside GD1alpha from GM1b. GD1alpha is a critical molecule in the communication and interaction between neuronal cells and their supportive cells, particularly in brain tissues, and functions as an adhesion molecule in the process of metastasis. Sialylation of glycoproteins or glycosphingolipids is very important in tumor development, neuronal development, nerve repair, immunological processes and regulation of hormone sensitivity. In Mus musculus (Mouse), this protein is Alpha-N-acetylgalactosaminide alpha-2,6-sialyltransferase 3 (St6galnac3).